Here is a 444-residue protein sequence, read N- to C-terminus: MPQSFKELGVAKWLSESLEAMKIHSPTSIQSACIPEILKGRDCIGGAKTGSGKTIAFAALMLTQWSQDPFGIFGLILTPTRELALQIAEQFAALGALMNIKVCVVVGGEDFVKQTLELQKKPHFVIATPGRLADHILNSGEETVSGLRRIKYLVLDEADRLLSNSFGSDLQRCFTILPPSEKRQTLLFTATVTDAVKALKDKPRAEGKLPVFLHQVDAGVDQIAIPKTLSTMYVFVPSYVKEAYLTSILKLPKYEESTAVVFVNRTMTAEVLRRMLRKLEFKVASLHSEMPQTERTNSLHRFKAGAARILIATDVASRGLDIPTVELVVNFDIPADPDDFIHRVGRTARAGRKGDAISIIGEKDIERIESIEERINKKMELLEGVDDDKVINDSLQKATTAKREAMLDMDKESFGERRKVNKKKRAVEEPSGKRQQKKVKKVKS.

Residues 3–31 carry the Q motif motif; sequence QSFKELGVAKWLSESLEAMKIHSPTSIQS. In terms of domain architecture, Helicase ATP-binding spans 34–210; sequence IPEILKGRDC…DKPRAEGKLP (177 aa). 47–54 is an ATP binding site; sequence AKTGSGKT. A DEAD box motif is present at residues 156–159; it reads DEAD. In terms of domain architecture, Helicase C-terminal spans 244–390; that stretch reads YLTSILKLPK…LLEGVDDDKV (147 aa). A compositionally biased stretch (basic and acidic residues) spans 402 to 418; that stretch reads KREAMLDMDKESFGERR. The tract at residues 402-444 is disordered; sequence KREAMLDMDKESFGERRKVNKKKRAVEEPSGKRQQKKVKKVKS. Positions 434 to 444 are enriched in basic residues; it reads RQQKKVKKVKS.

It belongs to the DEAD box helicase family. DDX49/DBP8 subfamily.

Its subcellular location is the nucleus. The protein resides in the nucleolus. The enzyme catalyses ATP + H2O = ADP + phosphate + H(+). Its function is as follows. ATP-binding RNA helicase involved in 40S ribosomal subunit biogenesis and is required for the normal formation of 18S rRNAs through pre-rRNA processing at A0, A1 and A2 sites. Required for vegetative growth. The polypeptide is ATP-dependent RNA helicase DBP8 (DBP8) (Lodderomyces elongisporus (strain ATCC 11503 / CBS 2605 / JCM 1781 / NBRC 1676 / NRRL YB-4239) (Yeast)).